Consider the following 396-residue polypeptide: Flavohemoprotein (396 aa).

Residues 1–136 (MLDAQTIATV…LANVFINREA (136 aa)) form the Globin domain. His85 serves as a coordination point for heme b. Residues Tyr95 and Glu135 each act as charge relay system in the active site. Residues 147–396 (GGWEGTRDFR…YECFGPHKVL (250 aa)) are reductase. Residues 150-255 (EGTRDFRIVA…VAPAGDFFMA (106 aa)) enclose the FAD-binding FR-type domain. FAD contacts are provided by residues Tyr188 and 204–207 (RQYS). NADP(+) is bound at residue 268 to 273 (GVGQTP). Residue 389 to 392 (CFGP) coordinates FAD.

This sequence belongs to the globin family. Two-domain flavohemoproteins subfamily. The protein in the C-terminal section; belongs to the flavoprotein pyridine nucleotide cytochrome reductase family. Requires heme b as cofactor. The cofactor is FAD.

The enzyme catalyses 2 nitric oxide + NADPH + 2 O2 = 2 nitrate + NADP(+) + H(+). The catalysed reaction is 2 nitric oxide + NADH + 2 O2 = 2 nitrate + NAD(+) + H(+). Functionally, is involved in NO detoxification in an aerobic process, termed nitric oxide dioxygenase (NOD) reaction that utilizes O(2) and NAD(P)H to convert NO to nitrate, which protects the bacterium from various noxious nitrogen compounds. Therefore, plays a central role in the inducible response to nitrosative stress. The chain is Flavohemoprotein from Shigella flexneri.